A 296-amino-acid chain; its full sequence is Cytidine deaminase (296 aa).

CMP/dCMP-type deaminase domains follow at residues 52–167 (SPVE…YLPD) and 191–296 (QGHD…YISL). 93–95 (NQE) contributes to the substrate binding site. H106 lines the Zn(2+) pocket. Catalysis depends on E108, which acts as the Proton donor. Zn(2+) contacts are provided by C133 and C136.

It belongs to the cytidine and deoxycytidylate deaminase family. In terms of assembly, homodimer. It depends on Zn(2+) as a cofactor.

The enzyme catalyses cytidine + H2O + H(+) = uridine + NH4(+). The catalysed reaction is 2'-deoxycytidine + H2O + H(+) = 2'-deoxyuridine + NH4(+). Its function is as follows. This enzyme scavenges exogenous and endogenous cytidine and 2'-deoxycytidine for UMP synthesis. The protein is Cytidine deaminase of Mannheimia succiniciproducens (strain KCTC 0769BP / MBEL55E).